A 391-amino-acid chain; its full sequence is NAD(P)H-quinone oxidoreductase subunit H, chloroplastic (391 aa).

It belongs to the complex I 49 kDa subunit family. In terms of assembly, NDH is composed of at least 16 different subunits, 5 of which are encoded in the nucleus.

The protein localises to the plastid. Its subcellular location is the chloroplast thylakoid membrane. The catalysed reaction is a plastoquinone + NADH + (n+1) H(+)(in) = a plastoquinol + NAD(+) + n H(+)(out). It carries out the reaction a plastoquinone + NADPH + (n+1) H(+)(in) = a plastoquinol + NADP(+) + n H(+)(out). Functionally, NDH shuttles electrons from NAD(P)H:plastoquinone, via FMN and iron-sulfur (Fe-S) centers, to quinones in the photosynthetic chain and possibly in a chloroplast respiratory chain. The immediate electron acceptor for the enzyme in this species is believed to be plastoquinone. Couples the redox reaction to proton translocation, and thus conserves the redox energy in a proton gradient. This is NAD(P)H-quinone oxidoreductase subunit H, chloroplastic from Physcomitrium patens (Spreading-leaved earth moss).